The sequence spans 91 residues: Antitoxin RelJ (91 aa).

Belongs to the phD/YefM antitoxin family. Homodimer.

Functionally, antitoxin component of a type II toxin-antitoxin (TA) system. A probable antitoxin for the putative mRNA interferase RelK. This is Antitoxin RelJ (relJ) from Mycobacterium tuberculosis (strain CDC 1551 / Oshkosh).